We begin with the raw amino-acid sequence, 612 residues long: Dihydroxy-acid dehydratase (612 aa).

Residue D81 coordinates Mg(2+). C122 contacts [2Fe-2S] cluster. Residues D123 and K124 each contribute to the Mg(2+) site. K124 is subject to N6-carboxylysine. C195 is a binding site for [2Fe-2S] cluster. Residue E491 coordinates Mg(2+). Residue S517 is the Proton acceptor of the active site.

The protein belongs to the IlvD/Edd family. Homodimer. Requires [2Fe-2S] cluster as cofactor. Mg(2+) serves as cofactor.

The enzyme catalyses (2R)-2,3-dihydroxy-3-methylbutanoate = 3-methyl-2-oxobutanoate + H2O. It carries out the reaction (2R,3R)-2,3-dihydroxy-3-methylpentanoate = (S)-3-methyl-2-oxopentanoate + H2O. It participates in amino-acid biosynthesis; L-isoleucine biosynthesis; L-isoleucine from 2-oxobutanoate: step 3/4. Its pathway is amino-acid biosynthesis; L-valine biosynthesis; L-valine from pyruvate: step 3/4. Functionally, functions in the biosynthesis of branched-chain amino acids. Catalyzes the dehydration of (2R,3R)-2,3-dihydroxy-3-methylpentanoate (2,3-dihydroxy-3-methylvalerate) into 2-oxo-3-methylpentanoate (2-oxo-3-methylvalerate) and of (2R)-2,3-dihydroxy-3-methylbutanoate (2,3-dihydroxyisovalerate) into 2-oxo-3-methylbutanoate (2-oxoisovalerate), the penultimate precursor to L-isoleucine and L-valine, respectively. The protein is Dihydroxy-acid dehydratase of Psychromonas ingrahamii (strain DSM 17664 / CCUG 51855 / 37).